Reading from the N-terminus, the 448-residue chain is Alginate biosynthesis transcriptional regulatory protein AlgB (448 aa).

One can recognise a Response regulatory domain in the interval Arg-10 to Leu-124. Asp-59 carries the post-translational modification 4-aspartylphosphate. The Sigma-54 factor interaction domain maps to Leu-147–Ile-376. ATP-binding positions include Gly-175–Gly-182 and Ala-238–Glu-247. A DNA-binding region (H-T-H motif) is located at residues Leu-425–Lys-444.

It participates in glycan biosynthesis; alginate biosynthesis [regulation]. In terms of biological role, positive regulator of the alginate biosynthetic gene algD. This chain is Alginate biosynthesis transcriptional regulatory protein AlgB (algB), found in Pseudomonas putida (strain ATCC 47054 / DSM 6125 / CFBP 8728 / NCIMB 11950 / KT2440).